Here is a 526-residue protein sequence, read N- to C-terminus: Bifunctional purine biosynthesis protein PurH (526 aa).

The 148-residue stretch at 1–148 (MSLNNIIKNA…KNYKDVIVIV (148 aa)) folds into the MGS-like domain.

It belongs to the PurH family.

The catalysed reaction is (6R)-10-formyltetrahydrofolate + 5-amino-1-(5-phospho-beta-D-ribosyl)imidazole-4-carboxamide = 5-formamido-1-(5-phospho-D-ribosyl)imidazole-4-carboxamide + (6S)-5,6,7,8-tetrahydrofolate. It carries out the reaction IMP + H2O = 5-formamido-1-(5-phospho-D-ribosyl)imidazole-4-carboxamide. It functions in the pathway purine metabolism; IMP biosynthesis via de novo pathway; 5-formamido-1-(5-phospho-D-ribosyl)imidazole-4-carboxamide from 5-amino-1-(5-phospho-D-ribosyl)imidazole-4-carboxamide (10-formyl THF route): step 1/1. Its pathway is purine metabolism; IMP biosynthesis via de novo pathway; IMP from 5-formamido-1-(5-phospho-D-ribosyl)imidazole-4-carboxamide: step 1/1. The polypeptide is Bifunctional purine biosynthesis protein PurH (Buchnera aphidicola subsp. Schizaphis graminum (strain Sg)).